The chain runs to 268 residues: Magnesium dechelatase SGR1, chloroplastic (268 aa).

The transit peptide at 1 to 48 directs the protein to the chloroplast; the sequence is MCSLSAIMLLPTKLKPAYSDKRSNSSSSSSLFFNNRRSKKKNQSIVPV.

The protein belongs to the staygreen family. In terms of assembly, interacts with HCAR, the chlorophyll catabolic enzymes (CCEs) NYC1, PAO and RCCR, and the LHCII complex. Part of a SGR1-CCE-LHCII complex, which acts in chlorophyll breakdown. In terms of tissue distribution, expressed in roots, leaves, seeds, flowers, buds, petals, sepals and siliques.

It is found in the plastid. The protein localises to the chloroplast thylakoid membrane. It carries out the reaction chlorophyll a + 2 H(+) = pheophytin a + Mg(2+). In terms of biological role, magnesium chelatase involved in chlorophyll a degradation in the chlorophyll-protein complexes of photosystem I (PSI) and photosystem II (PSII). Contributes to the degradation of PSI and PSII in the thylakoid membranes. Required to trigger chlorophyll degradation during natural and dark-induced leaf senescence. Mediates chlorophyll degradation during embryo degreening. Recombinant SGR1 possesses high dechelating activity against chlorophyll a, very low activity against chlorophyllide a, and no activity against chlorophyll b. Magnesium dechelation of chlorophyll a by SGR1 activates chlorophyll b degradation by inducing the expression of NYC1, an enzyme involved in chlorophyll b degradation. This is Magnesium dechelatase SGR1, chloroplastic from Arabidopsis thaliana (Mouse-ear cress).